A 309-amino-acid chain; its full sequence is Ribosomal RNA large subunit methyltransferase F (309 aa).

Positions 1–21 (MASQHDKKSVQSGLLHPRNPH) are disordered.

Belongs to the methyltransferase superfamily. METTL16/RlmF family.

It is found in the cytoplasm. It carries out the reaction adenosine(1618) in 23S rRNA + S-adenosyl-L-methionine = N(6)-methyladenosine(1618) in 23S rRNA + S-adenosyl-L-homocysteine + H(+). Functionally, specifically methylates the adenine in position 1618 of 23S rRNA. This chain is Ribosomal RNA large subunit methyltransferase F, found in Desulfotalea psychrophila (strain LSv54 / DSM 12343).